The sequence spans 430 residues: Small ribosomal subunit protein uS3m (430 aa).

Belongs to the universal ribosomal protein uS3 family.

The protein resides in the mitochondrion. This chain is Small ribosomal subunit protein uS3m (RPS3), found in Marchantia polymorpha (Common liverwort).